A 224-amino-acid polypeptide reads, in one-letter code: Small ribosomal subunit protein uS3c (224 aa).

The KH type-2 domain occupies 43–124 (IKNYIQKNRK…RLNIAIEKVK (82 aa)).

This sequence belongs to the universal ribosomal protein uS3 family. Part of the 30S ribosomal subunit.

It is found in the plastid. The protein localises to the chloroplast. This chain is Small ribosomal subunit protein uS3c (rps3), found in Saccharum hybrid (Sugarcane).